Consider the following 551-residue polypeptide: Membrane protein insertase YidC (551 aa).

Residues 3 to 23 (ANHIRILLLVTIAIMLISLMG) traverse the membrane as a helical segment. Residues 30–43 (PSNSSQSQTTQTQQ) show a composition bias toward low complexity. The tract at residues 30–61 (PSNSSQSQTTQTQQDNSHYNSDTPATTNVSTS) is disordered. The span at 44–61 (DNSHYNSDTPATTNVSTS) shows a compositional bias: polar residues. The next 3 membrane-spanning stretches (helical) occupy residues 361–381 (LVGN…LIFY), 431–451 (LSGC…YWVL), and 504–524 (IMMF…SGLV).

It belongs to the OXA1/ALB3/YidC family. Type 1 subfamily. As to quaternary structure, interacts with the Sec translocase complex via SecD. Specifically interacts with transmembrane segments of nascent integral membrane proteins during membrane integration.

The protein localises to the cell inner membrane. Its function is as follows. Required for the insertion and/or proper folding and/or complex formation of integral membrane proteins into the membrane. Involved in integration of membrane proteins that insert both dependently and independently of the Sec translocase complex, as well as at least some lipoproteins. Aids folding of multispanning membrane proteins. The chain is Membrane protein insertase YidC from Francisella philomiragia subsp. philomiragia (strain ATCC 25017 / CCUG 19701 / FSC 153 / O#319-036).